We begin with the raw amino-acid sequence, 684 residues long: Hydroxyproline O-galactosyltransferase GALT2 (684 aa).

Topologically, residues 1-22 (MKRVKSESFRGVYSSRRFKLSH) are cytoplasmic. The chain crosses the membrane as a helical; Signal-anchor for type II membrane protein span at residues 23–43 (FLLAIAGFYLVFLAFKFPHFI). Topologically, residues 44–684 (EMVAMLSGDT…KGRPQCCNFR (641 aa)) are lumenal. A disordered region spans residues 80–102 (KLEDEDHQSGPSTTQKVSPEEKI). Asn103, Asn127, and Asn162 each carry an N-linked (GlcNAc...) asparagine glycan. A Galectin domain is found at 191 to 405 (RIMLLPCGLA…DVDIHSIHAT (215 aa)). 2 N-linked (GlcNAc...) asparagine glycosylation sites follow: Asn524 and Asn632.

The protein belongs to the glycosyltransferase 31 family. Mn(2+) serves as cofactor. In terms of tissue distribution, expressed in stems and at lower levels in cauline leaves and siliques.

It localises to the golgi apparatus membrane. Its pathway is protein modification; protein glycosylation. In terms of biological role, possesses hydroxyproline O-galactosyltransferase activity. Transfers galactose from UDP-galactose to hydroxyproline residues in the arabinogalactan proteins (AGPs). Is specific for AGPs containing non-contiguous peptidyl hydroxyproline residues. Utilizes UDP-galactose solely as sugar donor. The addition of galactose onto the peptidyl hydroxyproline residues in AGP core proteins represents the first committed step in arabinogalactan polysaccharide addition. AGP glycans play essential roles in both vegetative and reproductive plant growth. The polypeptide is Hydroxyproline O-galactosyltransferase GALT2 (Arabidopsis thaliana (Mouse-ear cress)).